A 163-amino-acid chain; its full sequence is Phosphopantetheine adenylyltransferase (163 aa).

Ser-8 lines the substrate pocket. Residues 8–9 (SF) and His-16 contribute to the ATP site. Substrate is bound by residues Lys-40, Thr-72, and Arg-86. ATP is bound by residues 87–89 (GLR), Glu-97, and 122–128 (HSFLSSS).

This sequence belongs to the bacterial CoaD family. As to quaternary structure, homohexamer. Mg(2+) serves as cofactor.

It localises to the cytoplasm. The enzyme catalyses (R)-4'-phosphopantetheine + ATP + H(+) = 3'-dephospho-CoA + diphosphate. Its pathway is cofactor biosynthesis; coenzyme A biosynthesis; CoA from (R)-pantothenate: step 4/5. Its function is as follows. Reversibly transfers an adenylyl group from ATP to 4'-phosphopantetheine, yielding dephospho-CoA (dPCoA) and pyrophosphate. The polypeptide is Phosphopantetheine adenylyltransferase (Parasynechococcus marenigrum (strain WH8102)).